A 396-amino-acid chain; its full sequence is Acetate kinase (396 aa).

Asn8 is a Mg(2+) binding site. ATP is bound at residue Lys15. Arg89 contacts substrate. The active-site Proton donor/acceptor is the Asp146. Residues 206–210 (HIGNG), 283–285 (DMR), and 331–335 (GVGEN) contribute to the ATP site. A Mg(2+)-binding site is contributed by Glu383.

The protein belongs to the acetokinase family. Homodimer. Mg(2+) is required as a cofactor. The cofactor is Mn(2+).

The protein localises to the cytoplasm. The catalysed reaction is acetate + ATP = acetyl phosphate + ADP. It functions in the pathway metabolic intermediate biosynthesis; acetyl-CoA biosynthesis; acetyl-CoA from acetate: step 1/2. Functionally, catalyzes the formation of acetyl phosphate from acetate and ATP. Can also catalyze the reverse reaction. This Streptococcus pneumoniae (strain JJA) protein is Acetate kinase.